The following is a 265-amino-acid chain: uncharacterized protein (265 aa).

Positions 1 to 22 (MGYFKRVLLYIIVMVLSVFIIG) are cleaved as a signal peptide. Cys-23 is lipidated: N-palmitoyl cysteine. Cys-23 carries S-diacylglycerol cysteine lipidation.

It belongs to the staphylococcal tandem lipoprotein family.

It is found in the cell membrane. This is an uncharacterized protein from Staphylococcus aureus (strain MSSA476).